Here is a 244-residue protein sequence, read N- to C-terminus: 7-cyano-7-deazaguanine synthase (244 aa).

An ATP-binding site is contributed by 19–29 (FSGGQDSTTCL). C207, C222, C225, and C228 together coordinate Zn(2+).

This sequence belongs to the QueC family. Requires Zn(2+) as cofactor.

It catalyses the reaction 7-carboxy-7-deazaguanine + NH4(+) + ATP = 7-cyano-7-deazaguanine + ADP + phosphate + H2O + H(+). The protein operates within purine metabolism; 7-cyano-7-deazaguanine biosynthesis. Catalyzes the ATP-dependent conversion of 7-carboxy-7-deazaguanine (CDG) to 7-cyano-7-deazaguanine (preQ(0)). The polypeptide is 7-cyano-7-deazaguanine synthase (Bordetella avium (strain 197N)).